The following is a 639-amino-acid chain: Mediator of RNA polymerase II transcription subunit 17 (639 aa).

Belongs to the Mediator complex subunit 17 family. As to quaternary structure, component of the Mediator complex.

It localises to the nucleus. In terms of biological role, component of the Mediator complex, a coactivator involved in the regulated transcription of nearly all RNA polymerase II-dependent genes. Mediator functions as a bridge to convey information from gene-specific regulatory proteins to the basal RNA polymerase II transcription machinery. Mediator is recruited to promoters by direct interactions with regulatory proteins and serves as a scaffold for the assembly of a functional preinitiation complex with RNA polymerase II and the general transcription factors. The chain is Mediator of RNA polymerase II transcription subunit 17 (med17) from Xenopus tropicalis (Western clawed frog).